The primary structure comprises 244 residues: Leucyl/phenylalanyl-tRNA--protein transferase (244 aa).

The protein belongs to the L/F-transferase family.

It localises to the cytoplasm. The enzyme catalyses N-terminal L-lysyl-[protein] + L-leucyl-tRNA(Leu) = N-terminal L-leucyl-L-lysyl-[protein] + tRNA(Leu) + H(+). It carries out the reaction N-terminal L-arginyl-[protein] + L-leucyl-tRNA(Leu) = N-terminal L-leucyl-L-arginyl-[protein] + tRNA(Leu) + H(+). It catalyses the reaction L-phenylalanyl-tRNA(Phe) + an N-terminal L-alpha-aminoacyl-[protein] = an N-terminal L-phenylalanyl-L-alpha-aminoacyl-[protein] + tRNA(Phe). Functionally, functions in the N-end rule pathway of protein degradation where it conjugates Leu, Phe and, less efficiently, Met from aminoacyl-tRNAs to the N-termini of proteins containing an N-terminal arginine or lysine. The polypeptide is Leucyl/phenylalanyl-tRNA--protein transferase (Janthinobacterium sp. (strain Marseille) (Minibacterium massiliensis)).